The primary structure comprises 346 residues: Ephrin-B1 (346 aa).

The first 27 residues, 1 to 27 (MARPGQRWLGKWLVAMVVWALCRLATP), serve as a signal peptide directing secretion. The Extracellular portion of the chain corresponds to 28–237 (LAKNLEPVSW…GDPDGFFNSK (210 aa)). In terms of domain architecture, Ephrin RBD spans 30–164 (KNLEPVSWSS…TRTMKIIMKV (135 aa)). Disulfide bonds link Cys64–Cys101 and Cys89–Cys153. An N-linked (GlcNAc...) asparagine glycan is attached at Asn139. Residues 169–228 (NAVTPEQLTTSRPSKEADNTVKMATQAPGSRGSLGDSDGKHETVNQEEKSGPGASGGSSG) form a disordered region. The segment covering 205–218 (SDGKHETVNQEEKS) has biased composition (basic and acidic residues). A helical transmembrane segment spans residues 238-258 (VALFAAVGAGCVIFLLIIIFL). The Cytoplasmic portion of the chain corresponds to 259 to 346 (TVLLLKLRKR…QSPANIYYKV (88 aa)). The Nuclear localization signal signature appears at 260–273 (VLLLKLRKRHRKHT). The segment at 263–294 (LKLRKRHRKHTQQRAAALSLSTLASPKGGSGT) is interaction with ZHX2. Phosphoserine is present on residues Ser281 and Ser287. The short motif at 344-346 (YKV) is the PDZ-binding element.

The protein belongs to the ephrin family. In terms of assembly, interacts (via PDZ-binding motif) with GRIP1 and GRIP2 (via PDZ domain 6). Interacts with TLE1. The intracellular domain peptide interacts with ZHX2; the interaction enhances ZHX2 transcriptional repression activity. Inducible phosphorylation of tyrosine residues in the cytoplasmic domain. Post-translationally, proteolytically processed. The ectodomain is cleaved, probably by a metalloprotease, to produce a membrane-tethered C-terminal fragment. This fragment is then further processed by the gamma-secretase complex to yield a soluble intracellular domain peptide which can translocate to the nucleus. The intracellular domain peptide is highly labile suggesting that it is targeted for degradation by the proteasome. Widely expressed. Detected in both neuronal and non-neuronal tissues. Seems to have particularly strong expression in retina, sciatic nerve, heart and spinal cord.

It localises to the cell membrane. Its subcellular location is the membrane raft. The protein localises to the nucleus. Its function is as follows. Cell surface transmembrane ligand for Eph receptors, a family of receptor tyrosine kinases which are crucial for migration, repulsion and adhesion during neuronal, vascular and epithelial development. Binding to Eph receptors residing on adjacent cells leads to contact-dependent bidirectional signaling into neighboring cells. Shows high affinity for the receptor tyrosine kinase EPHB1/ELK. Can also bind EPHB2 and EPHB3. Binds to, and induces collapse of, commissural axons/growth cones in vitro. May play a role in constraining the orientation of longitudinally projecting axons. The protein is Ephrin-B1 (EFNB1) of Homo sapiens (Human).